A 359-amino-acid polypeptide reads, in one-letter code: tRNA N6-adenosine threonylcarbamoyltransferase (359 aa).

The Fe cation site is built by H115 and H119. Residues 137–141 (LVSGG), D170, G183, and N283 each bind substrate. Fe cation is bound at residue D311. The segment at 328 to 359 (APDSLDIAPRSRWPLDEKSAPVFGTGRRGAKA) is disordered.

It belongs to the KAE1 / TsaD family. The cofactor is Fe(2+).

The protein localises to the cytoplasm. It carries out the reaction L-threonylcarbamoyladenylate + adenosine(37) in tRNA = N(6)-L-threonylcarbamoyladenosine(37) in tRNA + AMP + H(+). Its function is as follows. Required for the formation of a threonylcarbamoyl group on adenosine at position 37 (t(6)A37) in tRNAs that read codons beginning with adenine. Is involved in the transfer of the threonylcarbamoyl moiety of threonylcarbamoyl-AMP (TC-AMP) to the N6 group of A37, together with TsaE and TsaB. TsaD likely plays a direct catalytic role in this reaction. This Brucella ovis (strain ATCC 25840 / 63/290 / NCTC 10512) protein is tRNA N6-adenosine threonylcarbamoyltransferase.